Reading from the N-terminus, the 759-residue chain is Phosphoribosylformylglycinamidine synthase subunit PurL (759 aa).

His-61 is an active-site residue. Residues Tyr-64 and Lys-105 each contribute to the ATP site. Residue Glu-107 participates in Mg(2+) binding. Substrate contacts are provided by residues 108–111 and Arg-130; that span reads SHNH. His-109 acts as the Proton acceptor in catalysis. Asp-131 contributes to the Mg(2+) binding site. Gln-260 lines the substrate pocket. Asp-288 contributes to the Mg(2+) binding site. 332 to 334 is a binding site for substrate; sequence ESQ. The ATP site is built by Asp-520 and Gly-557. Mg(2+) is bound at residue Asn-558. Ser-560 serves as a coordination point for substrate.

The protein belongs to the FGAMS family. Monomer. Part of the FGAM synthase complex composed of 1 PurL, 1 PurQ and 2 PurS subunits.

It is found in the cytoplasm. The enzyme catalyses N(2)-formyl-N(1)-(5-phospho-beta-D-ribosyl)glycinamide + L-glutamine + ATP + H2O = 2-formamido-N(1)-(5-O-phospho-beta-D-ribosyl)acetamidine + L-glutamate + ADP + phosphate + H(+). Its pathway is purine metabolism; IMP biosynthesis via de novo pathway; 5-amino-1-(5-phospho-D-ribosyl)imidazole from N(2)-formyl-N(1)-(5-phospho-D-ribosyl)glycinamide: step 1/2. In terms of biological role, part of the phosphoribosylformylglycinamidine synthase complex involved in the purines biosynthetic pathway. Catalyzes the ATP-dependent conversion of formylglycinamide ribonucleotide (FGAR) and glutamine to yield formylglycinamidine ribonucleotide (FGAM) and glutamate. The FGAM synthase complex is composed of three subunits. PurQ produces an ammonia molecule by converting glutamine to glutamate. PurL transfers the ammonia molecule to FGAR to form FGAM in an ATP-dependent manner. PurS interacts with PurQ and PurL and is thought to assist in the transfer of the ammonia molecule from PurQ to PurL. This Thermoplasma acidophilum (strain ATCC 25905 / DSM 1728 / JCM 9062 / NBRC 15155 / AMRC-C165) protein is Phosphoribosylformylglycinamidine synthase subunit PurL.